A 366-amino-acid polypeptide reads, in one-letter code: Anhydro-N-acetylmuramic acid kinase (366 aa).

10–17 (GTSMDGID) lines the ATP pocket.

This sequence belongs to the anhydro-N-acetylmuramic acid kinase family.

The enzyme catalyses 1,6-anhydro-N-acetyl-beta-muramate + ATP + H2O = N-acetyl-D-muramate 6-phosphate + ADP + H(+). The protein operates within amino-sugar metabolism; 1,6-anhydro-N-acetylmuramate degradation. Its pathway is cell wall biogenesis; peptidoglycan recycling. Catalyzes the specific phosphorylation of 1,6-anhydro-N-acetylmuramic acid (anhMurNAc) with the simultaneous cleavage of the 1,6-anhydro ring, generating MurNAc-6-P. Is required for the utilization of anhMurNAc either imported from the medium or derived from its own cell wall murein, and thus plays a role in cell wall recycling. The polypeptide is Anhydro-N-acetylmuramic acid kinase (Legionella pneumophila (strain Paris)).